We begin with the raw amino-acid sequence, 903 residues long: Alanine--tRNA ligase (903 aa).

Residues H591, H595, C695, and H699 each contribute to the Zn(2+) site.

Belongs to the class-II aminoacyl-tRNA synthetase family. Requires Zn(2+) as cofactor.

It is found in the cytoplasm. The catalysed reaction is tRNA(Ala) + L-alanine + ATP = L-alanyl-tRNA(Ala) + AMP + diphosphate. In terms of biological role, catalyzes the attachment of alanine to tRNA(Ala) in a two-step reaction: alanine is first activated by ATP to form Ala-AMP and then transferred to the acceptor end of tRNA(Ala). Also edits incorrectly charged Ser-tRNA(Ala) and Gly-tRNA(Ala) via its editing domain. The chain is Alanine--tRNA ligase from Methanosphaera stadtmanae (strain ATCC 43021 / DSM 3091 / JCM 11832 / MCB-3).